The primary structure comprises 166 residues: MLLEEVCVGDRLSGAAARGDVQEVRRLLHRELVHPDALNRFGKTALQVMMFGSPAVALELLKQGASPNVQDASGTSPVHDAARTGFLDTLKVLVEHGADVNALDSTGSLPIHLAIREGHSSVVSFLAPESDLHHRDASGLTPLELARQRGAQNLMDILQGHMMIPM.

Position 1 is an N-acetylmethionine (methionine 1). 4 ANK repeats span residues 41-69, 73-102, 106-135, and 138-165; these read FGKT…SPNV, SGTS…DVNA, TGSL…LHHR, and SGLT…MMIP.

It belongs to the CDKN2 cyclin-dependent kinase inhibitor family. In terms of assembly, interacts with CDK6.

The protein resides in the nucleus. Its subcellular location is the cytoplasm. Functionally, interacts strongly with CDK4 and CDK6 and inhibits them. In Mus musculus (Mouse), this protein is Cyclin-dependent kinase 4 inhibitor D (Cdkn2d).